The sequence spans 178 residues: Inorganic pyrophosphatase (178 aa).

Residues Lys30, Arg44, and Tyr56 each coordinate substrate. Residues Asp66, Asp71, and Asp103 each contribute to the Mg(2+) site. Tyr142 serves as a coordination point for substrate.

Belongs to the PPase family. As to quaternary structure, homohexamer. It depends on Mg(2+) as a cofactor.

The protein localises to the cytoplasm. It carries out the reaction diphosphate + H2O = 2 phosphate + H(+). Catalyzes the hydrolysis of inorganic pyrophosphate (PPi) forming two phosphate ions. The protein is Inorganic pyrophosphatase of Xylella fastidiosa (strain 9a5c).